Reading from the N-terminus, the 145-residue chain is uncharacterized protein (145 aa).

This is an uncharacterized protein from Homo sapiens (Human).